The chain runs to 473 residues: Keratin, type I cuticular Ha6 (473 aa).

The tract at residues 1-93 is head; that stretch reads MATQICTPTF…FCEGAFNGNE (93 aa). The 312-residue stretch at 93-404 folds into the IF rod domain; it reads EKATMQILND…RLLDGEDCKL (312 aa). Residues 94–128 form a coil 1A region; the sequence is KATMQILNDRLANYLEKVRQLEQENTQLECRIREW. The interval 129–139 is linker 1; the sequence is YECQIPYICPD. Positions 140–240 are coil 1B; that stretch reads YQSYFKTAEE…HEEEVNALRS (101 aa). Residues 241-256 are linker 12; it reads QLGDRLNVEVDAAPPV. The tract at residues 257–400 is coil 2; that stretch reads DLNKILDDMR…ATYRRLLDGE (144 aa). Positions 401-473 are tail; that stretch reads DCKLPAHPCS…SREHVVPRAM (73 aa).

It belongs to the intermediate filament family. In terms of assembly, heterotetramer of two type I and two type II keratins. In skin, only expressed in the suprabasal cells of tail scale epidermis. Suprabasally expressed in stratified squamous epithelia and also in the posterior unit of the complex filiform papillae of tongue. Expressed in rare anatomical sites in which an orthokeratinized stratum corneum would be too soft and a hard keratinized structure would be too rigid to meet the functional requirement of the respective epithelia.

This chain is Keratin, type I cuticular Ha6, found in Mus musculus (Mouse).